A 1155-amino-acid polypeptide reads, in one-letter code: DNA-directed RNA polymerase subunit beta (1155 aa).

It belongs to the RNA polymerase beta chain family. In terms of assembly, the RNAP catalytic core consists of 2 alpha, 1 beta, 1 beta' and 1 omega subunit. When a sigma factor is associated with the core the holoenzyme is formed, which can initiate transcription.

It carries out the reaction RNA(n) + a ribonucleoside 5'-triphosphate = RNA(n+1) + diphosphate. DNA-dependent RNA polymerase catalyzes the transcription of DNA into RNA using the four ribonucleoside triphosphates as substrates. The sequence is that of DNA-directed RNA polymerase subunit beta from Borrelia garinii subsp. bavariensis (strain ATCC BAA-2496 / DSM 23469 / PBi) (Borreliella bavariensis).